Here is a 394-residue protein sequence, read N- to C-terminus: Probable glycosyltransferase FCK3 (394 aa).

Belongs to the afumC glycosyltransferase family.

It functions in the pathway secondary metabolite biosynthesis. Probable glycosyl transferase; part of the gene cluster that mediates the biosynthesis of cytokinins such as fusatin, fusatinic acids or 8-oxofusatin, known for their growth promoting and anti-senescence activities toward host plants. FCK1 is a bifunctional enzyme that performs the first steps in the biosynthesis of Fusarium cytokinins. It first condenses adenosine monophosphate (AMP) with dimethylallyl diphosphate (DMAPP) to yield isoprenyl adenosine monophosphate. It then catalyzes the removal of the phosphoribose to produce isopentenylaldehyde. The cytochrome P450 monooxygenase then converts isopentenylaldehyde to trans-zeatin. A condensation step converts trans-zeatin to fusatin which is further modified to produce fusatinic acid. The mechanism for oxidation of fusatin to fusatinic acid remains unknown. 8-oxofusatin could be produced through several pathways, via direct oxygenation of fusatin, or via the 8-oxo-pentenyladenine intermediate which itself must arise from either the prenylation of 8-oxo-AMP by FCK1 and/or oxygenation of isopentenylaldehyde. Both the FCK3 and FCK4 enzymes act downstream of the identified cytokinins to produce yet unidentified compounds. In Fusarium pseudograminearum (strain CS3096) (Wheat and barley crown-rot fungus), this protein is Probable glycosyltransferase FCK3.